The following is a 188-amino-acid chain: Elongation factor P (188 aa).

Belongs to the elongation factor P family.

It is found in the cytoplasm. It participates in protein biosynthesis; polypeptide chain elongation. Functionally, involved in peptide bond synthesis. Stimulates efficient translation and peptide-bond synthesis on native or reconstituted 70S ribosomes in vitro. Probably functions indirectly by altering the affinity of the ribosome for aminoacyl-tRNA, thus increasing their reactivity as acceptors for peptidyl transferase. This chain is Elongation factor P, found in Ureaplasma urealyticum serovar 10 (strain ATCC 33699 / Western).